We begin with the raw amino-acid sequence, 1022 residues long: Leucine--tRNA ligase (1022 aa).

The 'HIGH' region signature appears at proline 47–histidine 57. A 'KMSKS' region motif is present at residues lysine 697 to serine 701. Lysine 700 is an ATP binding site.

It belongs to the class-I aminoacyl-tRNA synthetase family.

The protein localises to the cytoplasm. The enzyme catalyses tRNA(Leu) + L-leucine + ATP = L-leucyl-tRNA(Leu) + AMP + diphosphate. This Ignicoccus hospitalis (strain KIN4/I / DSM 18386 / JCM 14125) protein is Leucine--tRNA ligase.